The sequence spans 67 residues: Large ribosomal subunit protein bL35 (67 aa).

This sequence belongs to the bacterial ribosomal protein bL35 family.

The polypeptide is Large ribosomal subunit protein bL35 (Leptothrix cholodnii (strain ATCC 51168 / LMG 8142 / SP-6) (Leptothrix discophora (strain SP-6))).